Consider the following 322-residue polypeptide: tRNA-dihydrouridine(16) synthase (322 aa).

Residues 8–10 (PME) and Q69 contribute to the FMN site. The active-site Proton donor is C99. Residues K140, 200 to 202 (NGD), and 224 to 225 (GR) contribute to the FMN site.

The protein belongs to the Dus family. DusC subfamily. Requires FMN as cofactor.

It catalyses the reaction 5,6-dihydrouridine(16) in tRNA + NADP(+) = uridine(16) in tRNA + NADPH + H(+). The enzyme catalyses 5,6-dihydrouridine(16) in tRNA + NAD(+) = uridine(16) in tRNA + NADH + H(+). Catalyzes the synthesis of 5,6-dihydrouridine (D), a modified base found in the D-loop of most tRNAs, via the reduction of the C5-C6 double bond in target uridines. Specifically modifies U16 in tRNAs. In Cupriavidus necator (strain ATCC 17699 / DSM 428 / KCTC 22496 / NCIMB 10442 / H16 / Stanier 337) (Ralstonia eutropha), this protein is tRNA-dihydrouridine(16) synthase.